The primary structure comprises 100 residues: Small ribosomal subunit protein uS14c (100 aa).

It belongs to the universal ribosomal protein uS14 family. In terms of assembly, part of the 30S ribosomal subunit.

Its subcellular location is the plastid. The protein resides in the chloroplast. Functionally, binds 16S rRNA, required for the assembly of 30S particles. This is Small ribosomal subunit protein uS14c from Chara vulgaris (Common stonewort).